Consider the following 519-residue polypeptide: MMRSLHSLRRMSGTVLALMLAAGLPLSAAQAQPAKPAPKGDQKPATPAPSEQFVDGIAAIVNKDVITLREVREASKLASADLQKRGIQVPDERTLQKQVLQRLIMERLERQEADRMGIRVDEAQVDQAINMIASRNKITPAAMRAEIEKSGVTWEQYRKSLRDDIRMDRLRQRAVDANIIISDAEVDAFLKDQERNPAAAQATRAPAPQQPQPQPRQPAQSGPAMLVLAQILVRVPEGSSPDQVAALRKKAEGLLARAKKGDDFASLAAANSDGPEALQGGMMGARPLDGWPDLFVKAAGSLSAGQVSGLVQSGNGFHILKVVDRAGGGQPAQAARPAPAPAPQQPSSFQEGPSVAAPQGPVRVTQTHARHILIKTSTVMTDDQARQRLEQIRERLQGGAVKFEDMARQYSQDSTAPQGGDLGWVNPGDTVPPFEAAMNALQPNEISPPMLSPFGWHLIQVLERREHDVSDEVQRMRARQLLFERRAVPAFEDWLEQLRSQAFIDNRLEKQERLEQNNR.

Residues 1-31 (MMRSLHSLRRMSGTVLALMLAAGLPLSAAQA) form the signal peptide. Low complexity-rich tracts occupy residues 31 to 45 (AQPA…QKPA) and 197 to 207 (PAAAQATRAPA). 2 disordered regions span residues 31-50 (AQPA…PAPS) and 196-221 (NPAA…PAQS). The 102-residue stretch at 223–324 (PAMLVLAQIL…NGFHILKVVD (102 aa)) folds into the PpiC 1 domain. The interval 328-361 (GGQPAQAARPAPAPAPQQPSSFQEGPSVAAPQGP) is disordered. In terms of domain architecture, PpiC 2 spans 364-463 (VTQTHARHIL…FGWHLIQVLE (100 aa)).

It localises to the periplasm. It carries out the reaction [protein]-peptidylproline (omega=180) = [protein]-peptidylproline (omega=0). In terms of biological role, chaperone involved in the correct folding and assembly of outer membrane proteins. Recognizes specific patterns of aromatic residues and the orientation of their side chains, which are found more frequently in integral outer membrane proteins. May act in both early periplasmic and late outer membrane-associated steps of protein maturation. The protein is Chaperone SurA of Bordetella pertussis (strain Tohama I / ATCC BAA-589 / NCTC 13251).